We begin with the raw amino-acid sequence, 272 residues long: Tryptophan synthase alpha chain (272 aa).

Residues E53 and D64 each act as proton acceptor in the active site.

This sequence belongs to the TrpA family. Tetramer of two alpha and two beta chains.

It catalyses the reaction (1S,2R)-1-C-(indol-3-yl)glycerol 3-phosphate + L-serine = D-glyceraldehyde 3-phosphate + L-tryptophan + H2O. Its pathway is amino-acid biosynthesis; L-tryptophan biosynthesis; L-tryptophan from chorismate: step 5/5. Functionally, the alpha subunit is responsible for the aldol cleavage of indoleglycerol phosphate to indole and glyceraldehyde 3-phosphate. In Xanthomonas campestris pv. campestris (strain 8004), this protein is Tryptophan synthase alpha chain.